Here is a 386-residue protein sequence, read N- to C-terminus: Succinate--CoA ligase [ADP-forming] subunit beta (386 aa).

ATP contacts are provided by Lys46, Glu99, Ala102, and Glu107. Positions 199 and 213 each coordinate Mg(2+). Substrate contacts are provided by residues Asn264 and 321-323 (GIM).

Belongs to the succinate/malate CoA ligase beta subunit family. In terms of assembly, heterotetramer of two alpha and two beta subunits. Mg(2+) is required as a cofactor.

It carries out the reaction succinate + ATP + CoA = succinyl-CoA + ADP + phosphate. The enzyme catalyses GTP + succinate + CoA = succinyl-CoA + GDP + phosphate. The protein operates within carbohydrate metabolism; tricarboxylic acid cycle; succinate from succinyl-CoA (ligase route): step 1/1. Succinyl-CoA synthetase functions in the citric acid cycle (TCA), coupling the hydrolysis of succinyl-CoA to the synthesis of either ATP or GTP and thus represents the only step of substrate-level phosphorylation in the TCA. The beta subunit provides nucleotide specificity of the enzyme and binds the substrate succinate, while the binding sites for coenzyme A and phosphate are found in the alpha subunit. This is Succinate--CoA ligase [ADP-forming] subunit beta from Orientia tsutsugamushi (strain Boryong) (Rickettsia tsutsugamushi).